Here is a 201-residue protein sequence, read N- to C-terminus: Small ribosomal subunit protein uS4 (201 aa).

Residues 1–42 (MARYTGPVTRKSRRLGTDLVGGDQSFEKRPYPPGQHGRARIK) form a disordered region. Positions 91–157 (SRLDNVVYRA…VPFQIARETA (67 aa)) constitute an S4 RNA-binding domain.

Belongs to the universal ribosomal protein uS4 family. Part of the 30S ribosomal subunit. Contacts protein S5. The interaction surface between S4 and S5 is involved in control of translational fidelity.

In terms of biological role, one of the primary rRNA binding proteins, it binds directly to 16S rRNA where it nucleates assembly of the body of the 30S subunit. Functionally, with S5 and S12 plays an important role in translational accuracy. The chain is Small ribosomal subunit protein uS4 from Mycobacterium marinum (strain ATCC BAA-535 / M).